A 70-amino-acid chain; its full sequence is Large ribosomal subunit protein bL33m (70 aa).

This sequence belongs to the bacterial ribosomal protein bL33 family. Component of the mitochondrial large ribosomal subunit (mt-LSU). Mature yeast 74S mitochondrial ribosomes consist of a small (37S) and a large (54S) subunit. The 37S small subunit contains a 15S ribosomal RNA (15S mt-rRNA) and 34 different proteins. The 54S large subunit contains a 21S rRNA (21S mt-rRNA) and 46 different proteins. bL33m stabilizes the tRNA acceptor stem in the E-site.

Its subcellular location is the mitochondrion. Component of the mitochondrial ribosome (mitoribosome), a dedicated translation machinery responsible for the synthesis of mitochondrial genome-encoded proteins, including at least some of the essential transmembrane subunits of the mitochondrial respiratory chain. The mitoribosomes are attached to the mitochondrial inner membrane and translation products are cotranslationally integrated into the membrane. The chain is Large ribosomal subunit protein bL33m (MRPL39) from Saccharomyces cerevisiae (strain ATCC 204508 / S288c) (Baker's yeast).